We begin with the raw amino-acid sequence, 156 residues long: Small ribosomal subunit protein uS7 (156 aa).

It belongs to the universal ribosomal protein uS7 family. In terms of assembly, part of the 30S ribosomal subunit. Contacts proteins S9 and S11.

Its function is as follows. One of the primary rRNA binding proteins, it binds directly to 16S rRNA where it nucleates assembly of the head domain of the 30S subunit. Is located at the subunit interface close to the decoding center, probably blocks exit of the E-site tRNA. This chain is Small ribosomal subunit protein uS7, found in Thiomonas delicata (Thiomonas cuprina).